The sequence spans 907 residues: Interference hedgehog (907 aa).

A signal peptide spans 1–23; it reads MSLTRRFSLTLLLLLPLLTSLLA. The Extracellular portion of the chain corresponds to 24–709; it reads AIPVLQANLS…SHNETFNMNP (686 aa). 4 consecutive Ig-like C2-type domains span residues 42–149, 152–233, 252–340, and 346–433; these read PGVR…ASIS, GADT…VRLA, PALL…FIEL, and PRIL…LQVN. Intrachain disulfides connect cysteine 65–cysteine 127, cysteine 173–cysteine 221, and cysteine 276–cysteine 324. N-linked (GlcNAc...) asparagine glycosylation is found at asparagine 101, asparagine 203, asparagine 300, and asparagine 355. The cysteines at positions 367 and 415 are disulfide-linked. The disordered stretch occupies residues 427–474; the sequence is GTLLQVNPKQLPDGEGTGMDSGRSSARPTHSRKQKQQTQMVPPSAPNV. The segment covering 462-474 has biased composition (polar residues); that stretch reads QQTQMVPPSAPNV. 2 consecutive Fibronectin type-III domains span residues 468 to 578 and 586 to 681; these read PPSA…LQRG and VPEL…TQRP. N-linked (GlcNAc...) asparagine glycosylation is present at asparagine 473. Arginine 504, lysine 511, and lysine 513 together coordinate heparin. Asparagine 537 and asparagine 548 each carry an N-linked (GlcNAc...) asparagine glycan. A heparin-binding site is contributed by arginine 552. An N-linked (GlcNAc...) asparagine glycan is attached at asparagine 568. Residues 676 to 688 are compositionally biased toward polar residues; it reads GRTQRPRASSTPQ. Residues 676–701 form a disordered region; sequence GRTQRPRASSTPQPVLHAVDTTTPSH. Residue asparagine 702 is glycosylated (N-linked (GlcNAc...) asparagine). A helical transmembrane segment spans residues 710 to 730; sequence MLTGTIGGGALLVLLVISACL. At 731-907 the chain is on the cytoplasmic side; it reads CLCRRRSSRG…SSGSLNSVGV (177 aa). 2 disordered regions span residues 780–805 and 829–881; these read AQQQQQQQQQQLQQQQHDEKEAQDND and MSSS…NKPG. Low complexity-rich tracts occupy residues 781-794 and 853-863; these read QQQQQQQQQQLQQQ and NNNNLNQPGDG. Residues 865–878 show a composition bias toward polar residues; it reads LANSADSPRLQASN.

It belongs to the immunoglobulin superfamily. IHOG family. In terms of assembly, homodimer. Heterotetramer; 2 iHog chains bind 2 hh chains when facilitated by heparin, heparin is required to promote high-affinity interactions between hh and iHog.

It localises to the membrane. In terms of biological role, mediates response to the active Hedgehog (Hh) protein signal in embryos, functioning upstream or at the level of patched (ptc). The chain is Interference hedgehog from Drosophila virilis (Fruit fly).